Here is a 527-residue protein sequence, read N- to C-terminus: Peptide chain release factor 3 (527 aa).

The region spanning 9–277 is the tr-type G domain; that stretch reads AKRRTFAIIS…CIVDWAPQPL (269 aa). GTP contacts are provided by residues 18-25, 86-90, and 140-143; these read SHPDAGKT, DTPGH, and NKLD.

It belongs to the TRAFAC class translation factor GTPase superfamily. Classic translation factor GTPase family. PrfC subfamily.

It is found in the cytoplasm. Its function is as follows. Increases the formation of ribosomal termination complexes and stimulates activities of RF-1 and RF-2. It binds guanine nucleotides and has strong preference for UGA stop codons. It may interact directly with the ribosome. The stimulation of RF-1 and RF-2 is significantly reduced by GTP and GDP, but not by GMP. In Pseudomonas aeruginosa (strain LESB58), this protein is Peptide chain release factor 3.